The following is a 157-amino-acid chain: Histone H2B.3 (157 aa).

The interval 1-64 (MAPKKEEKPA…DKKSKKKAKV (64 aa)) is disordered. Residues 26–42 (KAVKAPKKKEKKAPAKK) show a composition bias toward basic residues. Lys-153 is covalently cross-linked (Glycyl lysine isopeptide (Lys-Gly) (interchain with G-Cter in ubiquitin)).

This sequence belongs to the histone H2B family. In terms of assembly, the nucleosome is a histone octamer containing two molecules each of H2A, H2B, H3 and H4 assembled in one H3-H4 heterotetramer and two H2A-H2B heterodimers. The octamer wraps approximately 147 bp of DNA. In terms of processing, monoubiquitinated to form H2BK143ub1; may give a specific tag for epigenetic transcriptional activation.

It is found in the nucleus. The protein resides in the chromosome. In terms of biological role, core component of nucleosome. Nucleosomes wrap and compact DNA into chromatin, limiting DNA accessibility to the cellular machineries which require DNA as a template. Histones thereby play a central role in transcription regulation, DNA repair, DNA replication and chromosomal stability. DNA accessibility is regulated via a complex set of post-translational modifications of histones, also called histone code, and nucleosome remodeling. The protein is Histone H2B.3 of Volvox carteri (Green alga).